Consider the following 296-residue polypeptide: Glycine N-acyltransferase (296 aa).

N6-acetyllysine; alternate occurs at positions 16, 127, and 141. N6-succinyllysine; alternate is present on residues Lys-16, Lys-127, and Lys-141. Lys-159 carries the post-translational modification N6-acetyllysine. Lys-169 is subject to N6-succinyllysine. 2 positions are modified to N6-acetyllysine; alternate: Lys-183 and Lys-256. An N6-succinyllysine; alternate mark is found at Lys-183 and Lys-256.

This sequence belongs to the glycine N-acyltransferase family.

It is found in the mitochondrion. It carries out the reaction an acyl-CoA + glycine = an N-acylglycine + CoA + H(+). The catalysed reaction is benzoyl-CoA + glycine = N-benzoylglycine + CoA + H(+). Its function is as follows. Mitochondrial acyltransferase which transfers an acyl group to the N-terminus of glycine and glutamine, although much less efficiently. Can conjugate a multitude of substrates to form a variety of N-acylglycines, thereby detoxify xenobiotics, such as benzoic acid or salicylic acid, and endogenous organic acids, such as isovaleric acid. In Pongo abelii (Sumatran orangutan), this protein is Glycine N-acyltransferase (GLYAT).